Here is a 971-residue protein sequence, read N- to C-terminus: Kinesin-like protein KIN-6 (971 aa).

Disordered stretches follow at residues 1–44 (MEEK…SSLA) and 93–121 (TTTT…RNPE). The segment covering 29-39 (ATPFTTTTKPP) has biased composition (low complexity). A Kinesin motor domain is found at 76–460 (SLKIFLRIKP…LRQASPYMKI (385 aa)). 202 to 209 (GPSGSGKT) provides a ligand contact to ATP. The segment covering 700–709 (RREAGSEESS) has biased composition (basic and acidic residues). Disordered stretches follow at residues 700–856 (RREA…TEEM) and 872–917 (KTTN…RLQP). Polar residues predominate over residues 768–783 (QSVNSEENVGIPSTIT). Residues 785 to 797 (VEAEVTDFQRDQN) are compositionally biased toward basic and acidic residues. Residues 809-827 (EVSQDCINSGLSNVQTKSA) show a composition bias toward polar residues. Residues 831–842 (RFPDSEKQERNR) show a composition bias toward basic and acidic residues. Positions 903–915 (KKQKNGQKPKRRL) are enriched in basic residues.

Belongs to the TRAFAC class myosin-kinesin ATPase superfamily. Kinesin family. KIN-6 subfamily.

The protein is Kinesin-like protein KIN-6 of Arabidopsis thaliana (Mouse-ear cress).